Reading from the N-terminus, the 938-residue chain is MTDYKNTLNLPETGFPMRGDLAKREPAMLQNWHDKKLYQKIREASKGKRSFILHDGPPYANGNIHLGHAVNHILKDIINKSKTAMGFDTPYVPGWDCHGLPIELKVEGLVGKPNENISASEFRQKCREYAKEQVDGQKADFMRLGILGDWDNPYLTMNFDTEAHIIRTLGKVIANGHLYKGSKPVHWCLDCGSSLAEAEVEYEDKVSPSIYVRFSAVDPVAVEAKFNAQGKGSGQISAVIWTTTPWTLPSNRAIALNSELEYQLVQFGDERVILATELVEAVQKVTGVEQVEVLGSAKGSDLELMRFNHPFYDFSVPFILGDHVTTDGGTGLVHTAPDHGLDDYIVGQKYKLEMAGLVANDGKFISTTPFFAGKGVFETNDLVLEKLKETGALLKLERIKHSYPHCWRHKTPIIFRATPQWFIGMETQGLRKQALGEIKRVRWIPSWGEARIDTMVANRPDWCISRQRTWGVPMTMFVHNETEQLHPRTLEILEEVAKRVEQAGIQAWWDLDPKEVLGEEDAKIYRKVPDTLDVWFDSGSTYASVVQQRPEFNGNSADMYLEGSDQHRGWFMSSLMLSTATDNKAPYNQVLTHGFTVDEKGRKMSKSLGNVIVPSEVWNKNGADILRLWVASTDYTGEIAVSHNILNSAGDTYRRIRNTARFLLANLNGFDPKRDLVKPEEMIALDRWAVSCALDAQNDIKEAYDNYQFHTVVQRLMRFCSIEMGSFYLDIIKDRQYTTKADSLARRSCQTALWHISEALVRWIAPILSFTADEIWGYLPQVEGRSEFVFTEEFYTDLFGLSESDKLDDNYWQKLLKVRAEVNRVLEQARNDKLIGAALEAKVTVYANDDIRPLLEQLGNELGFVLITSQAIVKPLAEADVAEGELAGLAVKVERADGEKCPRCWHYATDIGANAEHAEICGRCVENVVGEGETRNFA.

Residues 58–68 (PYANGNIHLGH) carry the 'HIGH' region motif. Residue E562 coordinates L-isoleucyl-5'-AMP. The 'KMSKS' region signature appears at 603–607 (KMSKS). Residue K606 participates in ATP binding. Residues C901, C904, C921, and C924 each coordinate Zn(2+).

The protein belongs to the class-I aminoacyl-tRNA synthetase family. IleS type 1 subfamily. As to quaternary structure, monomer. Requires Zn(2+) as cofactor.

The protein localises to the cytoplasm. The enzyme catalyses tRNA(Ile) + L-isoleucine + ATP = L-isoleucyl-tRNA(Ile) + AMP + diphosphate. Its function is as follows. Catalyzes the attachment of isoleucine to tRNA(Ile). As IleRS can inadvertently accommodate and process structurally similar amino acids such as valine, to avoid such errors it has two additional distinct tRNA(Ile)-dependent editing activities. One activity is designated as 'pretransfer' editing and involves the hydrolysis of activated Val-AMP. The other activity is designated 'posttransfer' editing and involves deacylation of mischarged Val-tRNA(Ile). The sequence is that of Isoleucine--tRNA ligase from Glaesserella parasuis serovar 5 (strain SH0165) (Haemophilus parasuis).